The chain runs to 398 residues: Phosphoglycerate kinase (398 aa).

Residues 21-23 (DFN), R36, 59-62 (HLGR), R119, and R157 each bind substrate. ATP-binding positions include K208, G296, E327, and 354–357 (GGDS).

This sequence belongs to the phosphoglycerate kinase family. In terms of assembly, monomer.

It localises to the cytoplasm. It carries out the reaction (2R)-3-phosphoglycerate + ATP = (2R)-3-phospho-glyceroyl phosphate + ADP. It functions in the pathway carbohydrate degradation; glycolysis; pyruvate from D-glyceraldehyde 3-phosphate: step 2/5. The chain is Phosphoglycerate kinase from Streptococcus pneumoniae serotype 4 (strain ATCC BAA-334 / TIGR4).